The sequence spans 86 residues: Small ribosomal subunit protein uS15 (86 aa).

Residues methionine 1–glutamate 10 are compositionally biased toward polar residues. A disordered region spans residues methionine 1–serine 21.

It belongs to the universal ribosomal protein uS15 family. Part of the 30S ribosomal subunit. Forms a bridge to the 50S subunit in the 70S ribosome, contacting the 23S rRNA.

Its function is as follows. One of the primary rRNA binding proteins, it binds directly to 16S rRNA where it helps nucleate assembly of the platform of the 30S subunit by binding and bridging several RNA helices of the 16S rRNA. Forms an intersubunit bridge (bridge B4) with the 23S rRNA of the 50S subunit in the ribosome. This is Small ribosomal subunit protein uS15 from Xylella fastidiosa (strain M23).